A 122-amino-acid polypeptide reads, in one-letter code: Large ribosomal subunit protein uL14 (122 aa).

Belongs to the universal ribosomal protein uL14 family. As to quaternary structure, part of the 50S ribosomal subunit. Forms a cluster with proteins L3 and L19. In the 70S ribosome, L14 and L19 interact and together make contacts with the 16S rRNA in bridges B5 and B8.

Binds to 23S rRNA. Forms part of two intersubunit bridges in the 70S ribosome. This is Large ribosomal subunit protein uL14 from Corynebacterium aurimucosum (strain ATCC 700975 / DSM 44827 / CIP 107346 / CN-1) (Corynebacterium nigricans).